The primary structure comprises 223 residues: UPF0441 protein YgiB (223 aa).

Residues 178–195 (TVPKTAMAPKPATTTTVT) are compositionally biased toward low complexity. The tract at residues 178–223 (TVPKTAMAPKPATTTTVTRGGFGESVAKQSTMQRSATGTSSRSMGG) is disordered. Residues 204-223 (AKQSTMQRSATGTSSRSMGG) are compositionally biased toward polar residues.

It belongs to the UPF0441 family.

In Shigella dysenteriae serotype 1 (strain Sd197), this protein is UPF0441 protein YgiB.